Consider the following 460-residue polypeptide: Fumarate hydratase class II (460 aa).

Substrate-binding positions include 95 to 97 (SGT), 126 to 129 (HPND), 136 to 138 (SSN), and T184. Catalysis depends on H185, which acts as the Proton donor/acceptor. S315 is a catalytic residue. Substrate is bound by residues S316 and 321-323 (KVN).

It belongs to the class-II fumarase/aspartase family. Fumarase subfamily. As to quaternary structure, homotetramer.

The protein resides in the cytoplasm. The enzyme catalyses (S)-malate = fumarate + H2O. It functions in the pathway carbohydrate metabolism; tricarboxylic acid cycle; (S)-malate from fumarate: step 1/1. Involved in the TCA cycle. Catalyzes the stereospecific interconversion of fumarate to L-malate. This chain is Fumarate hydratase class II, found in Chlamydia pneumoniae (Chlamydophila pneumoniae).